The sequence spans 283 residues: NAD kinase (283 aa).

D66 acts as the Proton acceptor in catalysis. Residues 66-67, 134-135, R145, R163, D165, and 176-181 each bind NAD(+); these read DG, ND, and TAYSMS.

The protein belongs to the NAD kinase family. It depends on a divalent metal cation as a cofactor.

The protein localises to the cytoplasm. It carries out the reaction NAD(+) + ATP = ADP + NADP(+) + H(+). Functionally, involved in the regulation of the intracellular balance of NAD and NADP, and is a key enzyme in the biosynthesis of NADP. Catalyzes specifically the phosphorylation on 2'-hydroxyl of the adenosine moiety of NAD to yield NADP. In Chlorobaculum tepidum (strain ATCC 49652 / DSM 12025 / NBRC 103806 / TLS) (Chlorobium tepidum), this protein is NAD kinase.